Here is a 323-residue protein sequence, read N- to C-terminus: Lipoyl synthase (323 aa).

[4Fe-4S] cluster contacts are provided by Cys-61, Cys-66, Cys-72, Cys-87, Cys-91, Cys-94, and Ser-300. Residues 73–289 enclose the Radical SAM core domain; sequence WDKKHATFMI…ETVAYTKGFL (217 aa).

Belongs to the radical SAM superfamily. Lipoyl synthase family. [4Fe-4S] cluster serves as cofactor.

Its subcellular location is the cytoplasm. The enzyme catalyses [[Fe-S] cluster scaffold protein carrying a second [4Fe-4S](2+) cluster] + N(6)-octanoyl-L-lysyl-[protein] + 2 oxidized [2Fe-2S]-[ferredoxin] + 2 S-adenosyl-L-methionine + 4 H(+) = [[Fe-S] cluster scaffold protein] + N(6)-[(R)-dihydrolipoyl]-L-lysyl-[protein] + 4 Fe(3+) + 2 hydrogen sulfide + 2 5'-deoxyadenosine + 2 L-methionine + 2 reduced [2Fe-2S]-[ferredoxin]. It participates in protein modification; protein lipoylation via endogenous pathway; protein N(6)-(lipoyl)lysine from octanoyl-[acyl-carrier-protein]: step 2/2. Catalyzes the radical-mediated insertion of two sulfur atoms into the C-6 and C-8 positions of the octanoyl moiety bound to the lipoyl domains of lipoate-dependent enzymes, thereby converting the octanoylated domains into lipoylated derivatives. The protein is Lipoyl synthase of Sinorhizobium medicae (strain WSM419) (Ensifer medicae).